The following is a 72-amino-acid chain: Conotoxin TxMMSK-04 (72 aa).

The signal sequence occupies residues 1–20 (MMSKLGVLLTICLLLFPLTA). A propeptide spanning residues 21-51 (VPLDGDQPADRPAERMQDGISSEHHPFFDSV) is cleaved from the precursor. Pyrrolidone carboxylic acid is present on glutamine 55. 3 disulfide bridges follow: cysteine 57-cysteine 71, cysteine 58-cysteine 67, and cysteine 63-cysteine 70. Proline 69 is modified (4-hydroxyproline). Cysteine 71 bears the Cysteine amide mark.

This sequence belongs to the conotoxin M superfamily. As to expression, expressed by the venom duct.

The protein localises to the secreted. The sequence is that of Conotoxin TxMMSK-04 from Conus textile (Cloth-of-gold cone).